The following is a 177-amino-acid chain: Bifunctional protein PyrR (177 aa).

Positions Ile-98 to Thr-110 match the PRPP-binding motif.

The protein belongs to the purine/pyrimidine phosphoribosyltransferase family. PyrR subfamily. As to quaternary structure, homodimer and homohexamer; in equilibrium.

It catalyses the reaction UMP + diphosphate = 5-phospho-alpha-D-ribose 1-diphosphate + uracil. Its function is as follows. Regulates transcriptional attenuation of the pyrimidine nucleotide (pyr) operon by binding in a uridine-dependent manner to specific sites on pyr mRNA. This disrupts an antiterminator hairpin in the RNA and favors formation of a downstream transcription terminator, leading to a reduced expression of downstream genes. Also displays a weak uracil phosphoribosyltransferase activity which is not physiologically significant. The polypeptide is Bifunctional protein PyrR (Clostridium kluyveri (strain ATCC 8527 / DSM 555 / NBRC 12016 / NCIMB 10680 / K1)).